The chain runs to 44 residues: Photosystem I reaction center subunit IX (44 aa).

Residues 7–27 (YLSVAPVISTLWFGSLAGLLI) form a helical membrane-spanning segment.

This sequence belongs to the PsaJ family.

It localises to the plastid. The protein resides in the chloroplast thylakoid membrane. Its function is as follows. May help in the organization of the PsaE and PsaF subunits. This chain is Photosystem I reaction center subunit IX, found in Populus alba (White poplar).